Here is a 559-residue protein sequence, read N- to C-terminus: Sesquiterpene synthase TPS3 (559 aa).

Residues R275, D312, D316, R453, and D456 each coordinate (2E,6E)-farnesyl diphosphate. Mg(2+)-binding residues include D312 and D316. A DDXXD motif motif is present at residues 312-316; the sequence is DDTYD. 3 residues coordinate Mg(2+): D456, T460, and E464.

Belongs to the terpene synthase family. Tpsa subfamily. In terms of assembly, monomer. It depends on Mg(2+) as a cofactor. Highly expressed in glandular trichomes. Expressed in roots and leaves.

It is found in the cytoplasm. The catalysed reaction is (2E,6E)-farnesyl diphosphate = (+)-(R)-germacrene A + diphosphate. The protein operates within secondary metabolite biosynthesis; terpenoid biosynthesis. Sesquiterpene synthase involved in the biosynthesis of volatile compounds. Mediates the conversion of (2E,6E)-farnesyl diphosphate (FPP) into (+)-(R)-germacrene A. The protein is Sesquiterpene synthase TPS3 of Xanthium strumarium (Rough cocklebur).